A 367-amino-acid chain; its full sequence is MSFAPEPSFSHGKPPAASCATAILLCNLGTPDAPTAPALRRYLAEFLSDPRVVEIPRPIWWLILHGIILRLRPKKSATKYASIWTPEGSPLKVWTQKQALMLRGYLGARGHTVEVRYAMRYGNPSIASQLNQLKADGATRILILPAYPQYSGTTTASVFDAVYSWAARVRRIPEFRFVNNYHDDPGYISALAERVRTHWRHYGQAGQLVMSFHGVPERTLKLGDPYHCECHKTARLLAEKLGLGKDRYKVTFQSRFGKAKWLEPYTEPTLIRMAQAGIERVDVVCPGFTGDCLETLEEIAMEARHAFLKAGGKEFHYIECLNDSPTWIAALAEFSARQLAGWPTQAPRDTEALRKSGERALAMGAPR.

Positions 213 and 294 each coordinate Fe cation.

Belongs to the ferrochelatase family.

Its subcellular location is the cytoplasm. The enzyme catalyses heme b + 2 H(+) = protoporphyrin IX + Fe(2+). It participates in porphyrin-containing compound metabolism; protoheme biosynthesis; protoheme from protoporphyrin-IX: step 1/1. Catalyzes the ferrous insertion into protoporphyrin IX. The protein is Ferrochelatase of Polaromonas sp. (strain JS666 / ATCC BAA-500).